Here is a 221-residue protein sequence, read N- to C-terminus: Large ribosomal subunit protein uL4 (221 aa).

The tract at residues 46–74 is disordered; the sequence is AGTASTKTRSEVSGGGRKPWPQKHTGRAR.

The protein belongs to the universal ribosomal protein uL4 family. Part of the 50S ribosomal subunit.

One of the primary rRNA binding proteins, this protein initially binds near the 5'-end of the 23S rRNA. It is important during the early stages of 50S assembly. It makes multiple contacts with different domains of the 23S rRNA in the assembled 50S subunit and ribosome. Functionally, forms part of the polypeptide exit tunnel. This chain is Large ribosomal subunit protein uL4, found in Petrotoga mobilis (strain DSM 10674 / SJ95).